A 213-amino-acid polypeptide reads, in one-letter code: High frequency lysogenization protein HflD homolog (213 aa).

The protein belongs to the HflD family.

It is found in the cytoplasm. The protein resides in the cell inner membrane. The polypeptide is High frequency lysogenization protein HflD homolog (Nitrosococcus oceani (strain ATCC 19707 / BCRC 17464 / JCM 30415 / NCIMB 11848 / C-107)).